We begin with the raw amino-acid sequence, 234 residues long: Triggering receptor expressed on myeloid cells 1 (234 aa).

Residues 1–20 (MRKTRLWGLLWMLFVSELRA) form the signal peptide. Residues 21 to 205 (ATKLTEEKYE…TDIIRVPVFN (185 aa)) lie on the Extracellular side of the membrane. One can recognise an Ig-like V-type domain in the interval 26–134 (EEKYELKEGQ…LFDRIRLVVT (109 aa)). A disulfide bridge connects residues Cys-41 and Cys-113. 3 N-linked (GlcNAc...) asparagine glycosylation sites follow: Asn-146, Asn-191, and Asn-194. A helical membrane pass occupies residues 206-226 (IVILLAGGFLSKSLVFSVLFA). The Cytoplasmic segment spans residues 227–234 (VTLRSFVP).

Monomer. Homomultimer; when activated. Interacts with TYROBP/DAP12. Interacts with TLR4. Glycosylated. Mostly expressed by immune cells of the myeloid lineage, such as monocytes, macrophages, neutrophils and dendritic cells. Expression is associated with a mature stage of myeloid development. Highly expressed in adult liver, lung and spleen than in corresponding fetal tissue. Also expressed in the lymph node, placenta, spinal cord and heart tissues. Isoform 2 was detected in the lung, liver and mature monocytes.

The protein localises to the cell membrane. Its subcellular location is the secreted. Functionally, cell surface receptor that plays important roles in innate and adaptive immunity by amplifying inflammatory responses. Upon activation by various ligands such as PGLYRP1, HMGB1 or HSP70, multimerizes and forms a complex with transmembrane adapter TYROBP/DAP12. In turn, initiates a SYK-mediated cascade of tyrosine phosphorylation, activating multiple downstream mediators such as BTK, MAPK1, MAPK3 or phospholipase C-gamma. This cascade promotes the neutrophil- and macrophage-mediated release of pro-inflammatory cytokines and/or chemokines, as well as their migration and thereby amplifies inflammatory responses that are triggered by bacterial and fungal infections. By also promoting the amplification of inflammatory signals that are initially triggered by Toll-like receptor (TLR) and NOD-like receptor engagement, plays a major role in the pathophysiology of acute and chronic inflammatory diseases of different etiologies including septic shock and atherosclerosis. In terms of biological role, acts as a decoy receptor, counterbalancing TREM1 pro-inflammatory activity through the neutralization of its ligand. This is Triggering receptor expressed on myeloid cells 1 (TREM1) from Homo sapiens (Human).